Reading from the N-terminus, the 205-residue chain is ATP phosphoribosyltransferase (205 aa).

It belongs to the ATP phosphoribosyltransferase family. Short subfamily. Heteromultimer composed of HisG and HisZ subunits.

The protein localises to the cytoplasm. The enzyme catalyses 1-(5-phospho-beta-D-ribosyl)-ATP + diphosphate = 5-phospho-alpha-D-ribose 1-diphosphate + ATP. It functions in the pathway amino-acid biosynthesis; L-histidine biosynthesis; L-histidine from 5-phospho-alpha-D-ribose 1-diphosphate: step 1/9. Its function is as follows. Catalyzes the condensation of ATP and 5-phosphoribose 1-diphosphate to form N'-(5'-phosphoribosyl)-ATP (PR-ATP). Has a crucial role in the pathway because the rate of histidine biosynthesis seems to be controlled primarily by regulation of HisG enzymatic activity. The protein is ATP phosphoribosyltransferase of Ruthia magnifica subsp. Calyptogena magnifica.